The following is a 364-amino-acid chain: Guanine nucleotide-binding protein alpha-8 subunit (364 aa).

Gly2 carries the N-myristoyl glycine lipid modification. A lipid anchor (S-palmitoyl cysteine) is attached at Cys5. The G-alpha domain occupies 38–364 (KILKLLILGP…QHTMQKVGIQ (327 aa)). Residues 41–54 (KLLILGPGESGKST) form a G1 motif region. GTP-binding positions include 46–53 (GPGESGKS), 186–192 (LKSRVPT), 211–215 (DVGGQ), 280–283 (NKID), and Ala336. The Mg(2+) site is built by Ser53 and Thr192. The tract at residues 184-192 (DILKSRVPT) is G2 motif. The interval 207 to 216 (FRIFDVGGQR) is G3 motif. A G4 motif region spans residues 276-283 (ILFLNKID). The segment at 334–339 (TCATDT) is G5 motif.

The protein belongs to the G-alpha family. G proteins are composed of 3 units; alpha, beta and gamma. The alpha chain contains the guanine nucleotide binding site.

Guanine nucleotide-binding proteins (G proteins) are involved as modulators or transducers in various transmembrane signaling systems. The sequence is that of Guanine nucleotide-binding protein alpha-8 subunit (gpa-8) from Caenorhabditis elegans.